Consider the following 390-residue polypeptide: MPPSGLRLLPLLLPLLWLLVLTPGRPAAGLSTCKTIDMELVKRKRIEAIRGQILSKLRLASPPSQGEVPPGPLPEAVLALYNSTRAQVAGESAETEPEPEADYYAKEVTRVLMVEKENEIYKTVETGSHSIYMFFNTSELRAAVPDPMLLSRAELRLLRLKLSVEQHVELYQKYSNNSWRYLSNRLLTPSDSPEWLSFDVTGVVRQWLSQGGAMEGFRLSAHCSCDSKDNTLRVGINGFSSSRRGDLATIDGMNRPFLLLMATPLERAQQLHSSRHRRALDTNYCFSSTEKNCCVRQLYIDFRKDLGWKWIHEPKGYHANFCLGPCPYIWSLDTQYSKVLALYNQHNPGASAAPCCVPQVLEPLPIVYYVGRKPKVEQLSNMIVRSCKCS.

Positions 1–29 are cleaved as a signal peptide; it reads MPPSGLRLLPLLLPLLWLLVLTPGRPAAG. Residues 30–74 are straightjacket domain; sequence LSTCKTIDMELVKRKRIEAIRGQILSKLRLASPPSQGEVPPGPLP. Residues 75–271 are arm domain; the sequence is EAVLALYNST…ATPLERAQQL (197 aa). 3 N-linked (GlcNAc...) asparagine glycosylation sites follow: asparagine 82, asparagine 136, and asparagine 176. The interval 226-252 is bowtie tail; it reads DSKDNTLRVGINGFSSSRRGDLATIDG. A Cell attachment site motif is present at residues 244–246; sequence RGD. Intrachain disulfides connect cysteine 285–cysteine 294, cysteine 293–cysteine 356, cysteine 322–cysteine 387, and cysteine 326–cysteine 389.

Belongs to the TGF-beta family. Homodimer; disulfide-linked. Interacts with the serine proteases, HTRA1 and HTRA3: the interaction with either inhibits TGFB1-mediated signaling and the HTRA protease activity is required for this inhibition. May interact with THSD4; this interaction may lead to sequestration by FBN1 microfibril assembly and attenuation of TGFB signaling. Interacts with CD109, DPT and ASPN. Interacts with EFEMP2. Interacts with TSKU; the interaction contributes to regulation of the hair cycle. Interacts with TGFBR3. As to quaternary structure, homodimer; disulfide-linked. Interacts with transforming growth factor beta-1 (TGF-beta-1) chain; interaction is non-covalent and maintains TGF-beta-1 in a latent state; each latency-associated peptide (LAP) monomer interacts with TGF-beta-1 in the other monomer. Interacts with LTBP1; leading to regulation of TGF-beta-1 activation. Interacts with LRRC32/GARP; leading to regulation of TGF-beta-1 activation on the surface of activated regulatory T-cells (Tregs). Interacts with LRRC33/NRROS; leading to regulation of TGF-beta-1 activation in macrophages and microglia. Interacts (via cell attachment site) with integrins ITGAV and ITGB6 (ITGAV:ITGB6), leading to release of the active TGF-beta-1. Latency-associated peptide: Interacts with NREP; the interaction results in a decrease in TGFB1 autoinduction. Interacts with HSP90AB1; inhibits latent TGFB1 activation. In terms of assembly, homodimer; disulfide-linked. Interacts with TGF-beta receptors (TGFBR1 and TGFBR2), leading to signal transduction. Post-translationally, transforming growth factor beta-1 proprotein: The precursor proprotein is cleaved in the Golgi apparatus by FURIN to form Transforming growth factor beta-1 (TGF-beta-1) and Latency-associated peptide (LAP) chains, which remain non-covalently linked, rendering TGF-beta-1 inactive. N-glycosylated. Deglycosylation leads to activation of Transforming growth factor beta-1 (TGF-beta-1); mechanisms triggering deglycosylation-driven activation of TGF-beta-1 are however unclear.

It is found in the secreted. It localises to the extracellular space. Its subcellular location is the extracellular matrix. Functionally, transforming growth factor beta-1 proprotein: Precursor of the Latency-associated peptide (LAP) and Transforming growth factor beta-1 (TGF-beta-1) chains, which constitute the regulatory and active subunit of TGF-beta-1, respectively. In terms of biological role, required to maintain the Transforming growth factor beta-1 (TGF-beta-1) chain in a latent state during storage in extracellular matrix. Associates non-covalently with TGF-beta-1 and regulates its activation via interaction with 'milieu molecules', such as LTBP1, LRRC32/GARP and LRRC33/NRROS, that control activation of TGF-beta-1. Interaction with LRRC33/NRROS regulates activation of TGF-beta-1 in macrophages and microglia. Interaction with LRRC32/GARP controls activation of TGF-beta-1 on the surface of activated regulatory T-cells (Tregs). Interaction with integrins (ITGAV:ITGB6 or ITGAV:ITGB8) results in distortion of the Latency-associated peptide chain and subsequent release of the active TGF-beta-1. Multifunctional protein that regulates the growth and differentiation of various cell types and is involved in various processes, such as normal development, immune function, microglia function and responses to neurodegeneration. Activation into mature form follows different steps: following cleavage of the proprotein in the Golgi apparatus, Latency-associated peptide (LAP) and Transforming growth factor beta-1 (TGF-beta-1) chains remain non-covalently linked rendering TGF-beta-1 inactive during storage in extracellular matrix. At the same time, LAP chain interacts with 'milieu molecules', such as LTBP1, LRRC32/GARP and LRRC33/NRROS that control activation of TGF-beta-1 and maintain it in a latent state during storage in extracellular milieus. TGF-beta-1 is released from LAP by integrins (ITGAV:ITGB6 or ITGAV:ITGB8): integrin-binding to LAP stabilizes an alternative conformation of the LAP bowtie tail and results in distortion of the LAP chain and subsequent release of the active TGF-beta-1. Once activated following release of LAP, TGF-beta-1 acts by binding to TGF-beta receptors (TGFBR1 and TGFBR2), which transduce signal. While expressed by many cells types, TGF-beta-1 only has a very localized range of action within cell environment thanks to fine regulation of its activation by Latency-associated peptide chain (LAP) and 'milieu molecules'. Plays an important role in bone remodeling: acts as a potent stimulator of osteoblastic bone formation, causing chemotaxis, proliferation and differentiation in committed osteoblasts. Can promote either T-helper 17 cells (Th17) or regulatory T-cells (Treg) lineage differentiation in a concentration-dependent manner. At high concentrations, leads to FOXP3-mediated suppression of RORC and down-regulation of IL-17 expression, favoring Treg cell development. At low concentrations in concert with IL-6 and IL-21, leads to expression of the IL-17 and IL-23 receptors, favoring differentiation to Th17 cells. Stimulates sustained production of collagen through the activation of CREB3L1 by regulated intramembrane proteolysis (RIP). Mediates SMAD2/3 activation by inducing its phosphorylation and subsequent translocation to the nucleus. Positively regulates odontoblastic differentiation in dental papilla cells, via promotion of IPO7-mediated translocation of phosphorylated SMAD2 to the nucleus and subsequent transcription of target genes. Can induce epithelial-to-mesenchymal transition (EMT) and cell migration in various cell types. This is Transforming growth factor beta-1 proprotein (TGFB1) from Equus caballus (Horse).